Consider the following 332-residue polypeptide: MKVTFEQLKAAFNRVLISRGVDSETADACAEMFARTTESGVYSHGVNRFPRFIQQLENGDIIPDAQPKRITSLGAIEQWDAQRSIGNLTAKKMMDRAIELAADHGIGLVALRNANHWMRGGSYGWQAAEKGYIGICWTNSIAVMPPWGAKECRIGTNPLIVAIPSTPITMVDMSMSMFSYGMLEVNRLAGRQLPVDGGFDDEGNLTKEPGVIEKNRRILPMGYWKGSGMSIVLDMIATLLSDGASVAEVTQDNSDEYGISQIFIAIEVDKLIDGPTRDAKLQRIMDYVTSAERADENQAIRLPGHEFTTLLAENRRNGITVDDSVWAKIQAL.

The Proton donor role is filled by histidine 44. Residues isoleucine 168–serine 174, tryptophan 224–lysine 225, and glycine 304–glutamate 306 contribute to the NAD(+) site.

The protein belongs to the LDH2/MDH2 oxidoreductase family. DlgD subfamily. As to quaternary structure, homodimer.

The protein localises to the cytoplasm. It catalyses the reaction 3-dehydro-L-gulonate + NAD(+) = 2,3-dioxo-L-gulonate + NADH + H(+). It carries out the reaction 3-dehydro-L-gulonate + NADP(+) = 2,3-dioxo-L-gulonate + NADPH + H(+). Catalyzes the reduction of 2,3-diketo-L-gulonate in the presence of NADH, to form 3-keto-L-gulonate. The polypeptide is 2,3-diketo-L-gulonate reductase (Escherichia coli (strain K12 / MC4100 / BW2952)).